A 321-amino-acid polypeptide reads, in one-letter code: Tetraacyldisaccharide 4'-kinase (321 aa).

Serine 54–threonine 61 lines the ATP pocket.

The protein belongs to the LpxK family.

It carries out the reaction a lipid A disaccharide + ATP = a lipid IVA + ADP + H(+). Its pathway is glycolipid biosynthesis; lipid IV(A) biosynthesis; lipid IV(A) from (3R)-3-hydroxytetradecanoyl-[acyl-carrier-protein] and UDP-N-acetyl-alpha-D-glucosamine: step 6/6. Functionally, transfers the gamma-phosphate of ATP to the 4'-position of a tetraacyldisaccharide 1-phosphate intermediate (termed DS-1-P) to form tetraacyldisaccharide 1,4'-bis-phosphate (lipid IVA). This chain is Tetraacyldisaccharide 4'-kinase, found in Rickettsia conorii (strain ATCC VR-613 / Malish 7).